Consider the following 302-residue polypeptide: ATP synthase gamma chain (302 aa).

Belongs to the ATPase gamma chain family. F-type ATPases have 2 components, CF(1) - the catalytic core - and CF(0) - the membrane proton channel. CF(1) has five subunits: alpha(3), beta(3), gamma(1), delta(1), epsilon(1). CF(0) has three main subunits: a, b and c.

It localises to the cell membrane. Functionally, produces ATP from ADP in the presence of a proton gradient across the membrane. The gamma chain is believed to be important in regulating ATPase activity and the flow of protons through the CF(0) complex. The polypeptide is ATP synthase gamma chain (Leuconostoc citreum (strain KM20)).